A 378-amino-acid chain; its full sequence is Erythronate-4-phosphate dehydrogenase (378 aa).

Positions 45 and 66 each coordinate substrate. NAD(+) is bound by residues Asp-146 and Thr-175. Residue Arg-208 is part of the active site. Asp-232 contributes to the NAD(+) binding site. The active site involves Glu-237. The active-site Proton donor is His-254. Residue Gly-257 participates in NAD(+) binding. Position 258 (Tyr-258) interacts with substrate.

Belongs to the D-isomer specific 2-hydroxyacid dehydrogenase family. PdxB subfamily. In terms of assembly, homodimer.

It is found in the cytoplasm. It carries out the reaction 4-phospho-D-erythronate + NAD(+) = (R)-3-hydroxy-2-oxo-4-phosphooxybutanoate + NADH + H(+). It participates in cofactor biosynthesis; pyridoxine 5'-phosphate biosynthesis; pyridoxine 5'-phosphate from D-erythrose 4-phosphate: step 2/5. Its function is as follows. Catalyzes the oxidation of erythronate-4-phosphate to 3-hydroxy-2-oxo-4-phosphonooxybutanoate. The sequence is that of Erythronate-4-phosphate dehydrogenase from Escherichia coli O45:K1 (strain S88 / ExPEC).